The sequence spans 1383 residues: WD repeat-containing protein dyf-2 (1383 aa).

5 WD repeats span residues 32–71 (EHGS…IDAL), 72–112 (NPTG…TDTV), 118–157 (SSKE…RIAV), 160–198 (KHQR…VSTT), and 337–376 (ETEK…LAAS). TPR repeat units follow at residues 756–789 (EEKN…MEAL), 810–847 (PKEI…NPQN), 885–918 (RVVK…DRAA), 940–973 (PKIH…DNQV), 996–1029 (IEGA…QEAF), 1031–1053 (LAEK…NISQ), and 1064–1097 (VNDM…ENCV).

In terms of assembly, component of the IFT complex A (IFT-A) composed of at least che-11, daf-10, dyf-2, ift-139, ift-43 and ifta-1. In terms of tissue distribution, expressed in ciliated sensory neurons.

It localises to the cell projection. The protein resides in the cilium. Functionally, component of the IFT complex A (IFT-A), a complex required for retrograde ciliary transport. Moves along the ciliary axoneme and is involved in the assembly, localization and the movement of other intraflagellar transport (IFT) proteins along the cilia axoneme. May also associate with the BBSome complex in order to mediate ciliary transport. Regulates cilia biogenesis, morphology and sensitivity to environmental cues. This chain is WD repeat-containing protein dyf-2, found in Caenorhabditis elegans.